Reading from the N-terminus, the 54-residue chain is Ovomucoid (54 aa).

Residues 4–54 enclose the Kazal-like domain; that stretch reads VDCSEHPKPACTLEDRPLCGSDNKIYSNKCDFCNAVLESNGTLTLSHFGKC. 3 disulfides stabilise this stretch: Cys6–Cys36, Cys14–Cys33, and Cys22–Cys54. A glycan (N-linked (GlcNAc...) asparagine) is linked at Asn43.

The protein localises to the secreted. In Argusianus argus (Great argus), this protein is Ovomucoid.